A 152-amino-acid polypeptide reads, in one-letter code: 3-hydroxyacyl-[acyl-carrier-protein] dehydratase FabZ (152 aa).

The active site involves histidine 57.

This sequence belongs to the thioester dehydratase family. FabZ subfamily.

The protein resides in the cytoplasm. It carries out the reaction a (3R)-hydroxyacyl-[ACP] = a (2E)-enoyl-[ACP] + H2O. Functionally, involved in unsaturated fatty acids biosynthesis. Catalyzes the dehydration of short chain beta-hydroxyacyl-ACPs and long chain saturated and unsaturated beta-hydroxyacyl-ACPs. This Pasteurella multocida (strain Pm70) protein is 3-hydroxyacyl-[acyl-carrier-protein] dehydratase FabZ.